The following is a 328-amino-acid chain: MPPSISAFQAAYIGIEVLIALVSVPGNVLVIWAVKVNQALRDATFCFIVSLAVADVAVGALVIPLAILINIGPETYFHTCLMVACPVLILTQSSILALLAIAVDRYLRVKIPLRYKAVVTPRRAAVAIAGCWILSLVVGLTPMFGWNNLREVQRAWAANGSVGEPVIKCEFEKVISMEYMVYFNFFVWVLPPLLLMVLIYLEVFYLIRRQLSKKASASSGDPHKYYGKELKIAKSLALILFLFALSWLPLHILNCVTLFCPSCQKPSILVYTAIFLTHGNSAMNPIVYAFRIHKFRVTFLKIWNDHFRCRPAPAGDGDEDLPEEKPND.

Residues 1-10 lie on the Extracellular side of the membrane; it reads MPPSISAFQA. A helical transmembrane segment spans residues 11-33; it reads AYIGIEVLIALVSVPGNVLVIWA. The Cytoplasmic portion of the chain corresponds to 34–46; it reads VKVNQALRDATFC. A helical transmembrane segment spans residues 47–69; that stretch reads FIVSLAVADVAVGALVIPLAILI. The Extracellular segment spans residues 70–80; the sequence is NIGPETYFHTC. Cysteine 80 and cysteine 169 form a disulfide bridge. A helical membrane pass occupies residues 81–102; sequence LMVACPVLILTQSSILALLAIA. The Cytoplasmic segment spans residues 103-123; the sequence is VDRYLRVKIPLRYKAVVTPRR. The chain crosses the membrane as a helical span at residues 124-146; that stretch reads AAVAIAGCWILSLVVGLTPMFGW. Residues 147-176 are Extracellular-facing; the sequence is NNLREVQRAWAANGSVGEPVIKCEFEKVIS. Asparagine 159 carries an N-linked (GlcNAc...) asparagine glycan. The helical transmembrane segment at 177-201 threads the bilayer; sequence MEYMVYFNFFVWVLPPLLLMVLIYL. The Cytoplasmic portion of the chain corresponds to 202–235; that stretch reads EVFYLIRRQLSKKASASSGDPHKYYGKELKIAKS. The chain crosses the membrane as a helical span at residues 236–259; it reads LALILFLFALSWLPLHILNCVTLF. The Extracellular segment spans residues 260–267; it reads CPSCQKPS. A helical membrane pass occupies residues 268 to 292; the sequence is ILVYTAIFLTHGNSAMNPIVYAFRI. Residues 293-328 lie on the Cytoplasmic side of the membrane; the sequence is HKFRVTFLKIWNDHFRCRPAPAGDGDEDLPEEKPND. A lipid anchor (S-palmitoyl cysteine) is attached at cysteine 309.

This sequence belongs to the G-protein coupled receptor 1 family.

It localises to the cell membrane. In terms of biological role, receptor for adenosine. The activity of this receptor is mediated by G proteins which inhibit adenylyl cyclase. This is Adenosine receptor A1 (ADORA1) from Oryctolagus cuniculus (Rabbit).